The primary structure comprises 409 residues: Probable aspartate/prephenate aminotransferase (409 aa).

Glycine 39, tryptophan 125, and asparagine 175 together coordinate L-aspartate. Lysine 239 is modified (N6-(pyridoxal phosphate)lysine). An L-aspartate-binding site is contributed by arginine 375.

It belongs to the class-I pyridoxal-phosphate-dependent aminotransferase family. In terms of assembly, homodimer. It depends on pyridoxal 5'-phosphate as a cofactor.

It localises to the cytoplasm. It carries out the reaction L-aspartate + 2-oxoglutarate = oxaloacetate + L-glutamate. The enzyme catalyses L-arogenate + 2-oxoglutarate = prephenate + L-glutamate. Catalyzes the reversible conversion of aspartate and 2-oxoglutarate to glutamate and oxaloacetate. Can also transaminate prephenate in the presence of glutamate. In Rickettsia felis (strain ATCC VR-1525 / URRWXCal2) (Rickettsia azadi), this protein is Probable aspartate/prephenate aminotransferase (aatA).